We begin with the raw amino-acid sequence, 1360 residues long: S-layer protein A (1360 aa).

An N-terminal signal peptide occupies residues 1-24 (MNKSAIRYLSLLLVFLMGGSFLAG).

The protein belongs to the Sulfolobales SlaA family. As to quaternary structure, the mushroom-shaped unit cells of the Sulfolobales' S-layers may consist of three SlaB subunits and six SlaA subunits.

The protein resides in the secreted. It is found in the cell wall. It localises to the S-layer. Its function is as follows. S-layer large protein. May form the highly ordered outer sheath. This Metallosphaera sedula (strain ATCC 51363 / DSM 5348 / JCM 9185 / NBRC 15509 / TH2) protein is S-layer protein A.